Reading from the N-terminus, the 512-residue chain is Lysine--tRNA ligase (512 aa).

Mg(2+) is bound by residues Glu408 and Glu415.

This sequence belongs to the class-II aminoacyl-tRNA synthetase family. Homodimer. Mg(2+) is required as a cofactor.

It localises to the cytoplasm. The enzyme catalyses tRNA(Lys) + L-lysine + ATP = L-lysyl-tRNA(Lys) + AMP + diphosphate. The sequence is that of Lysine--tRNA ligase from Prochlorococcus marinus (strain MIT 9312).